The chain runs to 409 residues: uncharacterized protein (409 aa).

10 consecutive transmembrane segments (helical) span residues I22–A42, L58–W78, G99–I119, F174–A194, N217–A237, S266–A286, F293–A312, L316–Y338, L353–I373, and L378–L398.

This sequence belongs to the major facilitator superfamily.

It localises to the cell membrane. This is an uncharacterized protein from Bacillus subtilis (strain 168).